Consider the following 169-residue polypeptide: S-ribosylhomocysteine lyase (169 aa).

Histidine 54, histidine 58, and cysteine 128 together coordinate Fe cation.

This sequence belongs to the LuxS family. Homodimer. Fe cation is required as a cofactor.

It carries out the reaction S-(5-deoxy-D-ribos-5-yl)-L-homocysteine = (S)-4,5-dihydroxypentane-2,3-dione + L-homocysteine. In terms of biological role, involved in the synthesis of autoinducer 2 (AI-2) which is secreted by bacteria and is used to communicate both the cell density and the metabolic potential of the environment. The regulation of gene expression in response to changes in cell density is called quorum sensing. Catalyzes the transformation of S-ribosylhomocysteine (RHC) to homocysteine (HC) and 4,5-dihydroxy-2,3-pentadione (DPD). The chain is S-ribosylhomocysteine lyase from Shewanella loihica (strain ATCC BAA-1088 / PV-4).